A 101-amino-acid polypeptide reads, in one-letter code: Small ribosomal subunit protein bS18c (101 aa).

Residues 1–19 (MDKSKQLFRKSKRSFRRRL) show a composition bias toward basic residues. Residues 1–23 (MDKSKQLFRKSKRSFRRRLPPIG) are disordered.

Belongs to the bacterial ribosomal protein bS18 family. Part of the 30S ribosomal subunit.

The protein resides in the plastid. It is found in the chloroplast. In Acorus calamus (Sweet flag), this protein is Small ribosomal subunit protein bS18c.